Consider the following 417-residue polypeptide: Histidine--tRNA ligase (417 aa).

The protein belongs to the class-II aminoacyl-tRNA synthetase family.

It localises to the cytoplasm. It carries out the reaction tRNA(His) + L-histidine + ATP = L-histidyl-tRNA(His) + AMP + diphosphate + H(+). The chain is Histidine--tRNA ligase from Pyrobaculum neutrophilum (strain DSM 2338 / JCM 9278 / NBRC 100436 / V24Sta) (Thermoproteus neutrophilus).